A 236-amino-acid polypeptide reads, in one-letter code: Serine/arginine-rich SC35-like splicing factor SCL28 (236 aa).

Disordered stretches follow at residues 1–53 (MARA…LIRN) and 124–219 (EENR…RVLT). Basic and acidic residues predominate over residues 14 to 43 (RPRDRSPPRERKGYDDNRLRERPSSRDHES). Residues 47–125 (SGLLIRNLPL…REIAIVFAEE (79 aa)) enclose the RRM domain. The segment covering 149–176 (TSHRSPRRRYRSHSRSRSPPRRESRHSK) has biased composition (basic residues). A Phosphoserine modification is found at serine 184. Basic and acidic residues predominate over residues 199–217 (RNEREYKSRNCRSPREERV).

This sequence belongs to the splicing factor SR family. SCL subfamily. As to quaternary structure, component of the spliceosome. Interacts with RS2Z33, CYP59, CYP63 and CYP95.

Its subcellular location is the nucleus speckle. In terms of biological role, involved in intron recognition and spliceosome assembly. Probably active at the 5' splice sites. The sequence is that of Serine/arginine-rich SC35-like splicing factor SCL28 (SCL28) from Arabidopsis thaliana (Mouse-ear cress).